The sequence spans 586 residues: Arginine--tRNA ligase (586 aa).

Residues 127–137 (PNVAKEMHVGH) carry the 'HIGH' region motif.

Belongs to the class-I aminoacyl-tRNA synthetase family. As to quaternary structure, monomer.

The protein resides in the cytoplasm. The catalysed reaction is tRNA(Arg) + L-arginine + ATP = L-arginyl-tRNA(Arg) + AMP + diphosphate. This is Arginine--tRNA ligase (argS) from Streptomyces coelicolor (strain ATCC BAA-471 / A3(2) / M145).